The chain runs to 145 residues: MHCAENCIFCKIIAGDIPSAKVYEDEHVLAFLDISQVTKGHTLVIPKTHIENVYEFTDELAKQYFHAVPKIARAIRDEFEPIGLNTLNNNGEKAGQSVFHYHMHIIPRYGKGDGFGAVWKTHADDYKPEDLQNISSSIAKRLASS.

Residues 8–116 (IFCKIIAGDI…PRYGKGDGFG (109 aa)) form the HIT domain. The Histidine triad motif motif lies at 100-104 (HYHMH).

This Bacillus subtilis (strain 168) protein is Protein hit (hit).